Reading from the N-terminus, the 298-residue chain is Probable phosphite transport system-binding protein HtxB (298 aa).

The N-terminal stretch at Met-1–Ala-33 is a signal peptide.

It belongs to the phosphate/phosphite/phosphonate binding protein family.

Its function is as follows. Probably forms part of a binding-protein-dependent hypophosphite transporter. The polypeptide is Probable phosphite transport system-binding protein HtxB (htxB) (Stutzerimonas stutzeri (Pseudomonas stutzeri)).